Consider the following 293-residue polypeptide: Ribosomal protein L11 methyltransferase (293 aa).

The S-adenosyl-L-methionine site is built by Thr145, Gly166, Asp188, and Asn230.

This sequence belongs to the methyltransferase superfamily. PrmA family.

The protein resides in the cytoplasm. It carries out the reaction L-lysyl-[protein] + 3 S-adenosyl-L-methionine = N(6),N(6),N(6)-trimethyl-L-lysyl-[protein] + 3 S-adenosyl-L-homocysteine + 3 H(+). In terms of biological role, methylates ribosomal protein L11. The chain is Ribosomal protein L11 methyltransferase from Shewanella pealeana (strain ATCC 700345 / ANG-SQ1).